We begin with the raw amino-acid sequence, 56 residues long: MPQRASIQQTADFLGVSTKTVRRYIADGRLKAVRLGPRLIRVERDSVEALMRPIGK.

The protein belongs to the L5likevirus excisionase protein family.

Excisionase and integrase are necessary for the excision of prophage from the host genome by site-specific recombination at the att site. This is Excisionase (XIS) from Mycobacterium (Mycobacteriophage D29).